Consider the following 129-residue polypeptide: Small ribosomal subunit protein uS8 (129 aa).

This sequence belongs to the universal ribosomal protein uS8 family. Part of the 30S ribosomal subunit.

In terms of biological role, one of the primary rRNA binding proteins, it binds directly to 16S rRNA central domain where it helps coordinate assembly of the platform of the 30S subunit. The chain is Small ribosomal subunit protein uS8 from Methanothrix thermoacetophila (strain DSM 6194 / JCM 14653 / NBRC 101360 / PT) (Methanosaeta thermophila).